A 145-amino-acid polypeptide reads, in one-letter code: Small ribosomal subunit protein eS19 (145 aa).

Position 23 is an N6-acetyllysine (K23). R67 carries the post-translational modification Omega-N-methylarginine. N6-acetyllysine is present on residues K111 and K115. Residue K143 is modified to N6-succinyllysine.

This sequence belongs to the eukaryotic ribosomal protein eS19 family. In terms of assembly, component of the small ribosomal subunit. Part of the small subunit (SSU) processome, composed of more than 70 proteins and the RNA chaperone small nucleolar RNA (snoRNA) U3. Interacts with RPS19BP1; the interaction is direct and mediates the integration of RPS19 in state post-A1. Interacts with RPS19BP1.

It is found in the cytoplasm. It localises to the nucleus. The protein localises to the nucleolus. Functionally, component of the small ribosomal subunit. The ribosome is a large ribonucleoprotein complex responsible for the synthesis of proteins in the cell. Required for pre-rRNA processing and maturation of 40S ribosomal subunits. Part of the small subunit (SSU) processome, first precursor of the small eukaryotic ribosomal subunit. During the assembly of the SSU processome in the nucleolus, many ribosome biogenesis factors, an RNA chaperone and ribosomal proteins associate with the nascent pre-rRNA and work in concert to generate RNA folding, modifications, rearrangements and cleavage as well as targeted degradation of pre-ribosomal RNA by the RNA exosome. The sequence is that of Small ribosomal subunit protein eS19 (RPS19) from Pongo abelii (Sumatran orangutan).